The primary structure comprises 597 residues: Aspartate--tRNA(Asp/Asn) ligase (597 aa).

E175 contacts L-aspartate. The aspartate stretch occupies residues 199–202; it reads QLFK. R221 contacts L-aspartate. Residues 221–223 and Q230 contribute to the ATP site; that span reads RDE. H453 is an L-aspartate binding site. ATP is bound at residue E487. R494 contributes to the L-aspartate binding site. Position 539 to 542 (539 to 542) interacts with ATP; sequence GWDR. Residues 562–597 form a disordered region; that stretch reads SGGGVDPLTDAPAPITPEQRKESGIDAKPKKKETKN. The segment covering 579-589 has biased composition (basic and acidic residues); it reads EQRKESGIDAK.

Belongs to the class-II aminoacyl-tRNA synthetase family. Type 1 subfamily. As to quaternary structure, homodimer.

It localises to the cytoplasm. It catalyses the reaction tRNA(Asx) + L-aspartate + ATP = L-aspartyl-tRNA(Asx) + AMP + diphosphate. Its function is as follows. Aspartyl-tRNA synthetase with relaxed tRNA specificity since it is able to aspartylate not only its cognate tRNA(Asp) but also tRNA(Asn). Reaction proceeds in two steps: L-aspartate is first activated by ATP to form Asp-AMP and then transferred to the acceptor end of tRNA(Asp/Asn). The sequence is that of Aspartate--tRNA(Asp/Asn) ligase from Corynebacterium kroppenstedtii (strain DSM 44385 / JCM 11950 / CIP 105744 / CCUG 35717).